The primary structure comprises 65 residues: Large ribosomal subunit protein bL35 (65 aa).

This sequence belongs to the bacterial ribosomal protein bL35 family.

In Nostoc sp. (strain PCC 7120 / SAG 25.82 / UTEX 2576), this protein is Large ribosomal subunit protein bL35.